Consider the following 205-residue polypeptide: Holliday junction branch migration complex subunit RuvA (205 aa).

The domain I stretch occupies residues 1-64 (MIGKLKGTID…EDQLRLFGFL (64 aa)). The tract at residues 65 to 143 (SALEREWFRL…AFAGEMSASI (79 aa)) is domain II. Residues 144 to 153 (GLKQELGEGV) are flexible linker. Positions 153 to 205 (VAAAPVSDAVSALTNLGYSRDQAANAVAAALKNGGEGGDSAKLIRLGLKELAR) are domain III.

Belongs to the RuvA family. As to quaternary structure, homotetramer. Forms an RuvA(8)-RuvB(12)-Holliday junction (HJ) complex. HJ DNA is sandwiched between 2 RuvA tetramers; dsDNA enters through RuvA and exits via RuvB. An RuvB hexamer assembles on each DNA strand where it exits the tetramer. Each RuvB hexamer is contacted by two RuvA subunits (via domain III) on 2 adjacent RuvB subunits; this complex drives branch migration. In the full resolvosome a probable DNA-RuvA(4)-RuvB(12)-RuvC(2) complex forms which resolves the HJ.

It localises to the cytoplasm. Functionally, the RuvA-RuvB-RuvC complex processes Holliday junction (HJ) DNA during genetic recombination and DNA repair, while the RuvA-RuvB complex plays an important role in the rescue of blocked DNA replication forks via replication fork reversal (RFR). RuvA specifically binds to HJ cruciform DNA, conferring on it an open structure. The RuvB hexamer acts as an ATP-dependent pump, pulling dsDNA into and through the RuvAB complex. HJ branch migration allows RuvC to scan DNA until it finds its consensus sequence, where it cleaves and resolves the cruciform DNA. This is Holliday junction branch migration complex subunit RuvA from Sinorhizobium fredii (strain NBRC 101917 / NGR234).